The following is a 130-amino-acid chain: Small ribosomal subunit protein uS8y (130 aa).

This sequence belongs to the universal ribosomal protein uS8 family.

This chain is Small ribosomal subunit protein uS8y (RPS15AC), found in Arabidopsis thaliana (Mouse-ear cress).